The sequence spans 327 residues: tRNA dimethylallyltransferase (327 aa).

Residue 14-21 participates in ATP binding; the sequence is GPTASGKT. 16–21 is a binding site for substrate; that stretch reads TASGKT. Interaction with substrate tRNA stretches follow at residues 39-42 and 163-167; these read DSAL and QRIQR.

It belongs to the IPP transferase family. In terms of assembly, monomer. Requires Mg(2+) as cofactor.

The catalysed reaction is adenosine(37) in tRNA + dimethylallyl diphosphate = N(6)-dimethylallyladenosine(37) in tRNA + diphosphate. Its function is as follows. Catalyzes the transfer of a dimethylallyl group onto the adenine at position 37 in tRNAs that read codons beginning with uridine, leading to the formation of N6-(dimethylallyl)adenosine (i(6)A). The chain is tRNA dimethylallyltransferase from Xanthomonas oryzae pv. oryzae (strain MAFF 311018).